Reading from the N-terminus, the 225-residue chain is UPF0758 protein AZOSEA04420 (225 aa).

The MPN domain occupies 102-225 (VFESPLAVRN…PLSFAERGLL (124 aa)). Positions 173, 175, and 186 each coordinate Zn(2+). The short motif at 173 to 186 (HNHPSGAAEPSPAD) is the JAMM motif element.

This sequence belongs to the UPF0758 family.

This Aromatoleum aromaticum (strain DSM 19018 / LMG 30748 / EbN1) (Azoarcus sp. (strain EbN1)) protein is UPF0758 protein AZOSEA04420.